The sequence spans 479 residues: Nucleoside-diphosphatase uda-1 (479 aa).

Over methionine 1–serine 7 the chain is Cytoplasmic. A helical; Signal-anchor for type II membrane protein transmembrane segment spans residues isoleucine 8–threonine 24. At glutamine 25–valine 479 the chain is on the lumenal side. The active-site Proton acceptor is the glutamate 171. 2 N-linked (GlcNAc...) asparagine glycosylation sites follow: asparagine 300 and asparagine 452.

It belongs to the GDA1/CD39 NTPase family. Requires Ca(2+) as cofactor. The cofactor is Mg(2+). Mn(2+) is required as a cofactor.

It is found in the endomembrane system. It carries out the reaction a ribonucleoside 5'-diphosphate + H2O = a ribonucleoside 5'-phosphate + phosphate + H(+). Functionally, hydrolyzes UDP and GDP but not any other nucleoside di-, mono- or triphosphates. May promote reglycosylation reactions involved in glycoproteins folding and quality control in the endoplasmic reticulum. The polypeptide is Nucleoside-diphosphatase uda-1 (uda-1) (Caenorhabditis elegans).